The chain runs to 147 residues: Hemoglobin subunit beta-2 (147 aa).

Valine 2 is subject to N-acetylvaline. The 145-residue stretch at 3–147 (HLTDAEKSAV…VATALAHKYH (145 aa)) folds into the Globin domain. At lysine 18 the chain carries N6-succinyllysine. Residue tyrosine 42 is modified to Phosphotyrosine. Phosphoserine is present on residues serine 45, serine 51, and serine 53. Lysine 60 carries the post-translational modification N6-succinyllysine. 2 residues coordinate heme b: histidine 64 and histidine 93. Arginine 105 carries the asymmetric dimethylarginine modification. The residue at position 124 (threonine 124) is a Phosphothreonine.

The protein belongs to the globin family. Heterotetramer of two alpha chains and two beta chains. In terms of tissue distribution, red blood cells.

In terms of biological role, involved in oxygen transport from the lung to the various peripheral tissues. The polypeptide is Hemoglobin subunit beta-2 (Hbb-b2) (Mus musculus (Mouse)).